Reading from the N-terminus, the 369-residue chain is Dual specificity protein phosphatase 1-B (369 aa).

Positions 21 to 138 (RAHKCLILDC…FSSQCPEFCN (118 aa)) constitute a Rhodanese domain. T168 carries the phosphothreonine; by MAPK1 modification. The Tyrosine-protein phosphatase domain occupies 175–316 (GPVEILPFLY…LLQFESQVLA (142 aa)). C260 acts as the Phosphocysteine intermediate in catalysis.

It belongs to the protein-tyrosine phosphatase family. Non-receptor class dual specificity subfamily. In terms of processing, phosphorylated by MAPK1/ERK2 at Thr-168 and at one or more serine residues in a progesterone-dependent manner. Phosphorylation reduces its rate of degradation but does not seem to affect phosphatase activity.

The protein localises to the nucleus. It catalyses the reaction O-phospho-L-seryl-[protein] + H2O = L-seryl-[protein] + phosphate. The enzyme catalyses O-phospho-L-threonyl-[protein] + H2O = L-threonyl-[protein] + phosphate. The catalysed reaction is O-phospho-L-tyrosyl-[protein] + H2O = L-tyrosyl-[protein] + phosphate. Its function is as follows. Dual specificity phosphatase that dephosphorylates MAP kinase MAPK1/ERK2 on both 'Thr-188' and 'Tyr-190', regulating its activity during the meiotic cell cycle. In Xenopus laevis (African clawed frog), this protein is Dual specificity protein phosphatase 1-B.